The sequence spans 596 residues: Serine/threonine-protein kinase PknH (596 aa).

Residues 1–373 (MSDAQDSRVG…QTPRKTNPWP (373 aa)) lie on the Cytoplasmic side of the membrane. The Protein kinase domain occupies 16-276 (YHLKRLLGRG…DLALAAHEAL (261 aa)). ATP contacts are provided by residues 22 to 30 (LGRGGMGEV) and Lys-45. Asp-139 serves as the catalytic Proton acceptor. A Phosphothreonine modification is found at Thr-170. The tract at residues 292 to 368 (QESTLPGTAA…PSPWAQTPRK (77 aa)) is disordered. The segment covering 307–318 (PTMPTVTPPPIQ) has biased composition (pro residues). The helical transmembrane segment at 374-394 (LVAGAAAVVLVLVLGAIGIWI) threads the bilayer. The Extracellular segment spans residues 395–596 (ANRPKPVQPP…AKIVDKVNKE (202 aa)).

The protein belongs to the protein kinase superfamily. Ser/Thr protein kinase family. Post-translationally, autophosphorylated on threonine and serine residues.

It localises to the cell membrane. It carries out the reaction L-seryl-[protein] + ATP = O-phospho-L-seryl-[protein] + ADP + H(+). The catalysed reaction is L-threonyl-[protein] + ATP = O-phospho-L-threonyl-[protein] + ADP + H(+). The polypeptide is Serine/threonine-protein kinase PknH (pknH) (Mycobacterium bovis (strain ATCC BAA-935 / AF2122/97)).